The primary structure comprises 161 residues: Regulator of ribonuclease activity A (161 aa).

This sequence belongs to the RraA family. Homotrimer. Binds to both RNA-binding sites in the C-terminal region of Rne and to RhlB.

The protein resides in the cytoplasm. Its function is as follows. Globally modulates RNA abundance by binding to RNase E (Rne) and regulating its endonucleolytic activity. Can modulate Rne action in a substrate-dependent manner by altering the composition of the degradosome. Modulates RNA-binding and helicase activities of the degradosome. The sequence is that of Regulator of ribonuclease activity A from Shigella boydii serotype 18 (strain CDC 3083-94 / BS512).